The primary structure comprises 360 residues: Fe(3+) ions import ATP-binding protein FbpC (360 aa).

Residues 4–236 (LEIKGLHKHY…PKDRMIAEFL (233 aa)) enclose the ABC transporter domain. An ATP-binding site is contributed by 36–43 (GPSGCGKT).

Belongs to the ABC transporter superfamily. Fe(3+) ion importer (TC 3.A.1.10) family. The complex is composed of two ATP-binding proteins (FbpC), two transmembrane proteins (FbpB) and a solute-binding protein (FbpA).

The protein resides in the cell inner membrane. The enzyme catalyses Fe(3+)(out) + ATP + H2O = Fe(3+)(in) + ADP + phosphate + H(+). Part of the ABC transporter complex FbpABC involved in Fe(3+) ions import. Responsible for energy coupling to the transport system. This Mesorhizobium japonicum (strain LMG 29417 / CECT 9101 / MAFF 303099) (Mesorhizobium loti (strain MAFF 303099)) protein is Fe(3+) ions import ATP-binding protein FbpC.